The chain runs to 87 residues: Large ribosomal subunit protein eL31 (87 aa).

It belongs to the eukaryotic ribosomal protein eL31 family.

This chain is Large ribosomal subunit protein eL31, found in Methanosphaerula palustris (strain ATCC BAA-1556 / DSM 19958 / E1-9c).